Here is a 1116-residue protein sequence, read N- to C-terminus: Minor outer capsid protein P2 (1116 aa).

One can recognise a PPPDE domain in the interval 929–1116 (ENNAANFFER…IGSNCSKLCA (188 aa)). Active-site residues include histidine 953 and cysteine 1111.

Belongs to the phytoreovirus minor outer capsid protein P2 family. As to quaternary structure, interacts with host ent-kaurene oxidases OSKO1, OSKO2, OSKOL4 and OSKOL5; this interaction.

It localises to the virion. The protein resides in the host cytoplasm. Its function is as follows. Minor capsid protein present in the outer capsid, which is required for adsorption of the virus onto host insect cells (Potential). Could play a role in the host plant virus induced dwarfism. The polypeptide is Minor outer capsid protein P2 (Rice dwarf virus (isolate Fujian) (RDV)).